A 313-amino-acid chain; its full sequence is Ribosomal RNA small subunit methyltransferase H (313 aa).

Residues 37-39 (GGH), aspartate 57, phenylalanine 83, aspartate 104, and glutamine 111 contribute to the S-adenosyl-L-methionine site.

It belongs to the methyltransferase superfamily. RsmH family.

The protein localises to the cytoplasm. The catalysed reaction is cytidine(1402) in 16S rRNA + S-adenosyl-L-methionine = N(4)-methylcytidine(1402) in 16S rRNA + S-adenosyl-L-homocysteine + H(+). In terms of biological role, specifically methylates the N4 position of cytidine in position 1402 (C1402) of 16S rRNA. The chain is Ribosomal RNA small subunit methyltransferase H from Mycoplasmoides gallisepticum (strain R(low / passage 15 / clone 2)) (Mycoplasma gallisepticum).